A 153-amino-acid chain; its full sequence is UPAR/Ly6 domain-containing protein cold (153 aa).

The N-terminal stretch at 1–25 (MKSWEIAVVLVAAVYLCSQVNFVAG) is a signal peptide. Residues 26–130 (LECYVCSNQT…FVISGAPSRQ (105 aa)) are Extracellular-facing. 6 disulfides stabilise this stretch: cysteine 28-cysteine 55, cysteine 31-cysteine 41, cysteine 48-cysteine 81, cysteine 87-cysteine 112, cysteine 99-cysteine 109, and cysteine 113-cysteine 118. N-linked (GlcNAc...) asparagine glycosylation occurs at asparagine 33. Serine 124 is lipidated: GPI-anchor amidated serine. Positions 125 to 153 (GAPSRQGYGVCLTLLTALLGLGSWLIPRS) are cleaved as a propeptide — removed in mature form. The helical transmembrane segment at 131 to 151 (GYGVCLTLLTALLGLGSWLIP) threads the bilayer. Residues 152 to 153 (RS) are Cytoplasmic-facing.

The protein belongs to the snake toxin-like superfamily. Post-translationally, GPI-anchored. In terms of tissue distribution, expressed in all tissues that form septate junctions, including hindgut, trachea, epidermis and dorsal pouch. Expressed in subperineurial glial cells that form the hemolymph-brain barrier of the central nervous system.

It localises to the endosome membrane. Its subcellular location is the endoplasmic reticulum membrane. It is found in the cell membrane. The protein localises to the cell junction. The protein resides in the septate junction. Functionally, required for septate junction assembly, possibly by organizing the preassembly and transport of septate junction proteins such as dlg1/disks large 1 and Nrx-IV/Neurexin-IV. Involved in paracellular barrier functions of trachea, hindgut and salivary gland mediated by epithelial cell septate junctions. Involved in paracellular barrier functions of the hemolymph-brain barrier (insect blood-brain barrier) mediated by glial cell septate junctions. Required for maintenance of septate junctions in imaginal disk epithelial cells. Involved in the epithelial cell wound-healing response. Directly or indirectly mediates cell-cell adhesion during septate junction formation. This Drosophila melanogaster (Fruit fly) protein is UPAR/Ly6 domain-containing protein cold.